We begin with the raw amino-acid sequence, 619 residues long: Dihydroxy-acid dehydratase (619 aa).

Asp-81 lines the Mg(2+) pocket. Cys-122 contacts [2Fe-2S] cluster. Mg(2+) is bound by residues Asp-123 and Lys-124. Lys-124 is subject to N6-carboxylysine. Cys-195 serves as a coordination point for [2Fe-2S] cluster. Glu-494 contributes to the Mg(2+) binding site. The active-site Proton acceptor is the Ser-520.

It belongs to the IlvD/Edd family. In terms of assembly, homodimer. [2Fe-2S] cluster serves as cofactor. Mg(2+) is required as a cofactor.

The catalysed reaction is (2R)-2,3-dihydroxy-3-methylbutanoate = 3-methyl-2-oxobutanoate + H2O. It carries out the reaction (2R,3R)-2,3-dihydroxy-3-methylpentanoate = (S)-3-methyl-2-oxopentanoate + H2O. The protein operates within amino-acid biosynthesis; L-isoleucine biosynthesis; L-isoleucine from 2-oxobutanoate: step 3/4. It functions in the pathway amino-acid biosynthesis; L-valine biosynthesis; L-valine from pyruvate: step 3/4. Its function is as follows. Functions in the biosynthesis of branched-chain amino acids. Catalyzes the dehydration of (2R,3R)-2,3-dihydroxy-3-methylpentanoate (2,3-dihydroxy-3-methylvalerate) into 2-oxo-3-methylpentanoate (2-oxo-3-methylvalerate) and of (2R)-2,3-dihydroxy-3-methylbutanoate (2,3-dihydroxyisovalerate) into 2-oxo-3-methylbutanoate (2-oxoisovalerate), the penultimate precursor to L-isoleucine and L-valine, respectively. This is Dihydroxy-acid dehydratase from Shewanella denitrificans (strain OS217 / ATCC BAA-1090 / DSM 15013).